A 380-amino-acid chain; its full sequence is Cytochrome b (380 aa).

The next 4 membrane-spanning stretches (helical) occupy residues 34-54 (FGSL…LLAM), 78-99 (WLIR…FLHI), 114-134 (WNTG…GYVL), and 179-199 (FFAL…IHLT). Heme b-binding residues include histidine 84 and histidine 98. The heme b site is built by histidine 183 and histidine 197. Residue histidine 202 participates in a ubiquinone binding. A run of 4 helical transmembrane segments spans residues 227–247 (LKDI…ALFS), 289–309 (LGGV…PFLH), 321–341 (LSQI…WIGS), and 348–368 (FIII…ILFP).

The protein belongs to the cytochrome b family. In terms of assembly, the cytochrome bc1 complex contains 11 subunits: 3 respiratory subunits (MT-CYB, CYC1 and UQCRFS1), 2 core proteins (UQCRC1 and UQCRC2) and 6 low-molecular weight proteins (UQCRH/QCR6, UQCRB/QCR7, UQCRQ/QCR8, UQCR10/QCR9, UQCR11/QCR10 and a cleavage product of UQCRFS1). This cytochrome bc1 complex then forms a dimer. Heme b serves as cofactor.

It localises to the mitochondrion inner membrane. Its function is as follows. Component of the ubiquinol-cytochrome c reductase complex (complex III or cytochrome b-c1 complex) that is part of the mitochondrial respiratory chain. The b-c1 complex mediates electron transfer from ubiquinol to cytochrome c. Contributes to the generation of a proton gradient across the mitochondrial membrane that is then used for ATP synthesis. This is Cytochrome b (MT-CYB) from Pavo muticus (Green peafowl).